A 429-amino-acid polypeptide reads, in one-letter code: Adenylosuccinate synthetase (429 aa).

GTP is bound by residues 12 to 18 (GDEGKGK) and 40 to 42 (GHT). The active-site Proton acceptor is aspartate 13. 2 residues coordinate Mg(2+): aspartate 13 and glycine 40. IMP contacts are provided by residues 13 to 16 (DEGK), 38 to 41 (NAGH), threonine 128, arginine 142, glutamine 223, threonine 238, and arginine 302. Histidine 41 (proton donor) is an active-site residue. Residue 298-304 (VNTGRKR) coordinates substrate. GTP-binding positions include arginine 304, 330 to 332 (KLD), and 412 to 414 (GVG).

This sequence belongs to the adenylosuccinate synthetase family. Homodimer. The cofactor is Mg(2+).

It localises to the cytoplasm. It catalyses the reaction IMP + L-aspartate + GTP = N(6)-(1,2-dicarboxyethyl)-AMP + GDP + phosphate + 2 H(+). Its pathway is purine metabolism; AMP biosynthesis via de novo pathway; AMP from IMP: step 1/2. In terms of biological role, plays an important role in the de novo pathway of purine nucleotide biosynthesis. Catalyzes the first committed step in the biosynthesis of AMP from IMP. This is Adenylosuccinate synthetase from Corynebacterium diphtheriae (strain ATCC 700971 / NCTC 13129 / Biotype gravis).